A 547-amino-acid chain; its full sequence is GMP synthase [glutamine-hydrolyzing] (547 aa).

The Glutamine amidotransferase type-1 domain maps to 12–210 (KILILDFGSQ…VLDIAGAKPD (199 aa)). The Nucleophile role is filled by C89. Catalysis depends on residues H184 and E186. Residues 211-403 (WIMRDHIEEA…LGLPAEMVYR (193 aa)) form the GMPS ATP-PPase domain. An ATP-binding site is contributed by 238-244 (SGGVDSS).

Homodimer.

It catalyses the reaction XMP + L-glutamine + ATP + H2O = GMP + L-glutamate + AMP + diphosphate + 2 H(+). The protein operates within purine metabolism; GMP biosynthesis; GMP from XMP (L-Gln route): step 1/1. In terms of biological role, catalyzes the synthesis of GMP from XMP. The protein is GMP synthase [glutamine-hydrolyzing] of Burkholderia pseudomallei (strain 1710b).